Here is a 70-residue protein sequence, read N- to C-terminus: Conotoxin elongated-tx3a-a (70 aa).

Residues 1–24 form the signal peptide; that stretch reads MLKMGVVLFIFLVLFPLATLQLDA. The propeptide occupies 25–44; that stretch reads DQPVERYAENKQLLSPDERR. 3 disulfides stabilise this stretch: Cys55–Cys68, Cys56–Cys66, and Cys61–Cys69. 6'-bromotryptophan; partial is present on Trp58. At Cys69 the chain carries Cysteine amide; partial.

The protein belongs to the conotoxin M superfamily. Post-translationally, two short peptides are produced from this precursor; Conotoxin tx3a-b is amidated at Cys-69 (but has no bromotryptophan), whereas conotoxin tx3a-a has an unmodified Gly-70 and a bromotryptophan. Two elongated peptides are also produced; Conotoxin elongated-tx3a-b is amidated at Cys-69 (but has no bromotryptophan), whereas conotoxin elongated tx3a-a has an unmodified Gly-70 (but has no bromotryptophan). Ju et al. (2022) describe a disulfide connectivity (C55-C61; C56-C69; C66-C68) that differs from that of Han and colleagues (2006), McDougal et al. (2008), and Ueberheide et al. (2009). As to expression, expressed by the venom duct. Is present in all duct parts with a highest content in part 2 (proximal of the venom bulb) and then decreases in concentration toward the end of the duct.

Its subcellular location is the secreted. Functionally, intracranial injection into mice causes scratching and hyperactivity. In vitro, inhibits proliferation of the mice ovarian cancer cells ID8. This chain is Conotoxin elongated-tx3a-a, found in Conus textile (Cloth-of-gold cone).